The primary structure comprises 341 residues: Flagellar P-ring protein (341 aa).

Residues 1–19 (MKQVFLWLIFVLAFHKLLA) form the signal peptide.

This sequence belongs to the FlgI family. As to quaternary structure, the basal body constitutes a major portion of the flagellar organelle and consists of four rings (L,P,S, and M) mounted on a central rod.

It is found in the periplasm. The protein resides in the bacterial flagellum basal body. Its function is as follows. Assembles around the rod to form the L-ring and probably protects the motor/basal body from shearing forces during rotation. The protein is Flagellar P-ring protein of Helicobacter acinonychis (strain Sheeba).